The sequence spans 378 residues: N-acetyllactosaminide beta-1,3-N-acetylglucosaminyltransferase 4 (378 aa).

At methionine 1 to cysteine 28 the chain is on the cytoplasmic side. Residues arginine 29–leucine 49 form a helical; Signal-anchor for type II membrane protein membrane-spanning segment. At arginine 50–arginine 378 the chain is on the lumenal side. The segment at proline 59–threonine 81 is disordered. Asparagine 192 carries an N-linked (GlcNAc...) asparagine glycan.

The protein belongs to the glycosyltransferase 31 family. As to expression, mainly expressed in brain tissues such as whole brain, hippocampus, amygdala, cerebellum and caudate nucleus. Also expressed in colon, esophagus and kidney.

It is found in the golgi apparatus membrane. It catalyses the reaction a beta-D-galactosyl-(1-&gt;4)-N-acetyl-beta-D-glucosaminyl derivative + UDP-N-acetyl-alpha-D-glucosamine = an N-acetyl-beta-D-glucosaminyl-(1-&gt;3)-beta-D-galactosyl-(1-&gt;4)-N-acetyl-beta-D-glucosaminyl derivative + UDP + H(+). Its pathway is protein modification; protein glycosylation. Beta-1,3-N-acetylglucosaminyltransferase involved in the synthesis of poly-N-acetyllactosamine. Has activity for type 2 oligosaccharides. The protein is N-acetyllactosaminide beta-1,3-N-acetylglucosaminyltransferase 4 (B3GNT4) of Homo sapiens (Human).